A 433-amino-acid polypeptide reads, in one-letter code: Enolase (433 aa).

A (2R)-2-phosphoglycerate-binding site is contributed by Gln-167. Glu-209 functions as the Proton donor in the catalytic mechanism. 3 residues coordinate Mg(2+): Asp-246, Glu-287, and Asp-314. (2R)-2-phosphoglycerate contacts are provided by Lys-339, Arg-368, Ser-369, and Lys-390. The active-site Proton acceptor is Lys-339.

It belongs to the enolase family. Mg(2+) is required as a cofactor.

It localises to the cytoplasm. It is found in the secreted. The protein localises to the cell surface. It catalyses the reaction (2R)-2-phosphoglycerate = phosphoenolpyruvate + H2O. It participates in carbohydrate degradation; glycolysis; pyruvate from D-glyceraldehyde 3-phosphate: step 4/5. Functionally, catalyzes the reversible conversion of 2-phosphoglycerate (2-PG) into phosphoenolpyruvate (PEP). It is essential for the degradation of carbohydrates via glycolysis. This chain is Enolase, found in Prochlorococcus marinus (strain NATL2A).